A 788-amino-acid polypeptide reads, in one-letter code: Integrin beta-6 (788 aa).

The first 21 residues, 1 to 21 (MGIELLCLFFLCLGRNDHVQG), serve as a signal peptide directing secretion. Residues 22 to 71 (GCAVGGAETCEDCLLIGPQCAWCSQENFTHLSGVGERCDTPANLLAKGCQ) form the PSI domain. At 22-709 (GCAVGGAETC…KDCPKPPNIP (688 aa)) the chain is on the extracellular side. 19 cysteine pairs are disulfide-bonded: C23–C41, C31–C454, C34–C59, C44–C70, C197–C204, C252–C293, C394–C406, C426–C452, C456–C476, C467–C479, C481–C490, C492–C519, C502–C517, C511–C522, C524–C537, C539–C560, C544–C558, C552–C563, and C565–C574. N-linked (GlcNAc...) asparagine glycosylation is found at N48 and N97. Residues 131–371 (YPVDLYYLMD…QLIISAYEEL (241 aa)) enclose the VWFA domain. Mg(2+)-binding residues include D140, S142, and S144. Ca(2+)-binding residues include S144, D147, D148, and E179. Ca(2+)-binding residues include N235, D237, P239, and E240. A Mg(2+)-binding site is contributed by E240. An N-linked (GlcNAc...) asparagine glycan is attached at N260. Residues D271 and K355 each coordinate Ca(2+). N-linked (GlcNAc...) asparagine glycosylation occurs at N387. N418 carries N-linked (GlcNAc...) asparagine glycosylation. 4 I-EGF domains span residues 456–491 (CQKE…HHCE), 492–538 (CGED…PYCQ), 539–575 (CDNF…EYCN), and 576–615 (CTTS…PTCE). N-linked (GlcNAc...) asparagine glycosylation is found at N463 and N471. N541 carries N-linked (GlcNAc...) asparagine glycosylation. N575 carries an N-linked (GlcNAc...) asparagine glycan. 9 disulfides stabilise this stretch: C576/C599, C583/C597, C591/C602, C604/C614, C617/C620, C624/C670, C630/C649, C633/C645, and C678/C702. A helical transmembrane segment spans residues 710–730 (MIMLGVSLAILLIGVVLLCIW). The interval 731–758 (KLLVSFHDRKEVAKFEAERSKAKWQTGT) is interaction with HAX1. At 731–788 (KLLVSFHDRKEVAKFEAERSKAKWQTGTNPLYRGSTSTFKNVTYKHKEKQKVDLSTDG) the chain is on the cytoplasmic side.

The protein belongs to the integrin beta chain family. Heterodimer of an alpha and a beta subunit. Interacts with FLNB. Interacts with HAX1. ITGAV:ITGB6 interacts with FBN1. ITGAV:ITGB6 interacts with TGFB1.

The protein resides in the cell membrane. The protein localises to the cell junction. Its subcellular location is the focal adhesion. Integrin alpha-V:beta-6 (ITGAV:ITGB6) is a receptor for fibronectin and cytotactin. It recognizes the sequence R-G-D in its ligands. ITGAV:ITGB6 acts as a receptor for fibrillin-1 (FBN1) and mediates R-G-D-dependent cell adhesion to FBN1. Integrin alpha-V:beta-6 (ITGAV:ITGB6) mediates R-G-D-dependent release of transforming growth factor beta-1 (TGF-beta-1) from regulatory Latency-associated peptide (LAP), thereby playing a key role in TGF-beta-1 activation. The chain is Integrin beta-6 (ITGB6) from Bos taurus (Bovine).